Here is a 601-residue protein sequence, read N- to C-terminus: Elongation factor 4 (601 aa).

The tr-type G domain maps to 7–189 (DTIRNFSIVA…AIVAKLPPPK (183 aa)). Residues 19 to 24 (DHGKST) and 136 to 139 (NKID) each bind GTP.

Belongs to the TRAFAC class translation factor GTPase superfamily. Classic translation factor GTPase family. LepA subfamily.

Its subcellular location is the cell inner membrane. The catalysed reaction is GTP + H2O = GDP + phosphate + H(+). Its function is as follows. Required for accurate and efficient protein synthesis under certain stress conditions. May act as a fidelity factor of the translation reaction, by catalyzing a one-codon backward translocation of tRNAs on improperly translocated ribosomes. Back-translocation proceeds from a post-translocation (POST) complex to a pre-translocation (PRE) complex, thus giving elongation factor G a second chance to translocate the tRNAs correctly. Binds to ribosomes in a GTP-dependent manner. This chain is Elongation factor 4, found in Methylobacterium sp. (strain 4-46).